The following is a 279-amino-acid chain: tRNA (guanine-N(1)-)-methyltransferase (279 aa).

S-adenosyl-L-methionine-binding positions include glycine 132 and 152–157 (IGDYVL).

This sequence belongs to the RNA methyltransferase TrmD family. Homodimer.

Its subcellular location is the cytoplasm. It carries out the reaction guanosine(37) in tRNA + S-adenosyl-L-methionine = N(1)-methylguanosine(37) in tRNA + S-adenosyl-L-homocysteine + H(+). Functionally, specifically methylates guanosine-37 in various tRNAs. In Saccharophagus degradans (strain 2-40 / ATCC 43961 / DSM 17024), this protein is tRNA (guanine-N(1)-)-methyltransferase.